Consider the following 100-residue polypeptide: MYLSPQEKDKLLVVTAALLAERRLNRGLKLNHPEAVAWLSFQVLEGARDGKSVSTLMNEGTRWLTKEQVMEGVPELIHEVQIEAVFPDGTKLVTLHNPIR.

This sequence belongs to the urease gamma subunit family. In terms of assembly, heterotrimer of UreA (gamma), UreB (beta) and UreC (alpha) subunits. Three heterotrimers associate to form the active enzyme.

Its subcellular location is the cytoplasm. The catalysed reaction is urea + 2 H2O + H(+) = hydrogencarbonate + 2 NH4(+). Its pathway is nitrogen metabolism; urea degradation; CO(2) and NH(3) from urea (urease route): step 1/1. In Prochlorococcus marinus (strain NATL1A), this protein is Urease subunit gamma.